We begin with the raw amino-acid sequence, 349 residues long: 5-deoxyribose 1-phosphate isomerase (349 aa).

Substrate-binding positions include 49 to 51 (RGA), R92, and Q199. Catalysis depends on D240, which acts as the Proton donor. 250 to 251 (NK) contributes to the substrate binding site.

The protein belongs to the EIF-2B alpha/beta/delta subunits family. DrdI subfamily.

It carries out the reaction 5-deoxy-alpha-D-ribose 1-phosphate = 5-deoxy-D-ribulose 1-phosphate. Its pathway is carbohydrate degradation. Functionally, catalyzes the isomerization of 5-deoxy-alpha-D-ribose 1-phosphate to 5-deoxy-D-ribulose 1-phosphate, as part of a 5-deoxyribose salvage pathway that recycles this toxic radical SAM enzyme by-product to mainstream metabolites. The protein is 5-deoxyribose 1-phosphate isomerase of Clostridium botulinum (strain Langeland / NCTC 10281 / Type F).